A 76-amino-acid polypeptide reads, in one-letter code: ATP synthase subunit 9, mitochondrial (76 aa).

Transmembrane regions (helical) follow at residues 14–34 and 56–76; these read ISTIGLIGAGIGIGIVFAALI and ALSEATGLFCLMISFMLLFAV.

Belongs to the ATPase C chain family. In terms of assembly, F-type ATPases have 2 components, CF(1) - the catalytic core - and CF(0) - the membrane proton channel. CF(1) has five subunits: alpha(3), beta(3), gamma(1), delta(1), epsilon(1). CF(0) has three main subunits: a, b and c.

It is found in the mitochondrion membrane. Its function is as follows. Mitochondrial membrane ATP synthase (F(1)F(0) ATP synthase or Complex V) produces ATP from ADP in the presence of a proton gradient across the membrane which is generated by electron transport complexes of the respiratory chain. F-type ATPases consist of two structural domains, F(1) - containing the extramembraneous catalytic core and F(0) - containing the membrane proton channel, linked together by a central stalk and a peripheral stalk. During catalysis, ATP synthesis in the catalytic domain of F(1) is coupled via a rotary mechanism of the central stalk subunits to proton translocation. Part of the complex F(0) domain. A homomeric c-ring of probably 10 subunits is part of the complex rotary element. The polypeptide is ATP synthase subunit 9, mitochondrial (ATP9) (Candida glabrata (strain ATCC 2001 / BCRC 20586 / JCM 3761 / NBRC 0622 / NRRL Y-65 / CBS 138) (Yeast)).